The following is a 481-amino-acid chain: Exodeoxyribonuclease I (481 aa).

The 182-residue stretch at 12–193 (LFYDYETFGK…SSDVYATMNI (182 aa)) folds into the Exonuclease domain. Mg(2+)-binding residues include Asp-15, Glu-17, and Asp-186. Substrate is bound at residue Glu-17. Positions 202–350 (PKLFNFFFKY…KLKKFLCSIA (149 aa)) constitute an ExoI SH3-like domain. The ExoI C-terminal domain maps to 356 to 471 (NGSNVDLKMY…ELFEYVKYTR (116 aa)).

Monomer. Interacts with ssb (via C-terminus); this interaction stimulates the exonuclease activity by recruiting the enzyme to its substrate. The cofactor is Mg(2+).

The enzyme catalyses Exonucleolytic cleavage in the 3'- to 5'-direction to yield nucleoside 5'-phosphates.. Degrades single-stranded DNA (ssDNA) in a highly processive manner. Also functions as a DNA deoxyribophosphodiesterase that releases deoxyribose-phosphate moieties following the cleavage of DNA at an apurinic/apyrimidinic (AP) site by either an AP endonuclease or AP lyase. The polypeptide is Exodeoxyribonuclease I (sbcB) (Buchnera aphidicola subsp. Baizongia pistaciae (strain Bp)).